Here is a 705-residue protein sequence, read N- to C-terminus: Zinc finger protein 770 (705 aa).

Residue Lys-16 forms a Glycyl lysine isopeptide (Lys-Gly) (interchain with G-Cter in SUMO2) linkage. 3 consecutive C2H2-type zinc fingers follow at residues 31–53 (YICNICFKHFETPSKLARHYLIH), 59–81 (FECDVCHKNFRQLVHLERHQLTH), and 85–107 (FSCNICQRHFKNLKTFVKHQQLH). Residues Lys-116, Lys-124, and Lys-149 each participate in a glycyl lysine isopeptide (Lys-Gly) (interchain with G-Cter in SUMO2) cross-link. C2H2-type zinc fingers lie at residues 164-186 (HACTICGKMFPSQSKLDRHSLIH), 192-214 (FKCVLCSKSFRQSTHLKIHQLTH), and 220-242 (FQCCFCQKGFKIQSKLLKHKQIH). Residue Lys-266 forms a Glycyl lysine isopeptide (Lys-Gly) (interchain with G-Cter in SUMO2) linkage. The C2H2-type 7; degenerate zinc-finger motif lies at 298-322 (FQCSECEECFESEQILNGHKCLPAR). C2H2-type zinc fingers lie at residues 485-507 (CPCDKCDKVFPSISKLQRHYLIH), 513-535 (FDCNVCGKSFRQSAHLKRHKLTH), 640-662 (YQCSVCCKHFRSPSKLERHYLIH), and 668-690 (FECSVCGKTFRQAPHWKRHQLTH). Lys-698 participates in a covalent cross-link: Glycyl lysine isopeptide (Lys-Gly) (interchain with G-Cter in SUMO2).

It belongs to the krueppel C2H2-type zinc-finger protein family.

It localises to the nucleus. In terms of biological role, may be involved in transcriptional regulation. This is Zinc finger protein 770 (Znf770) from Mus musculus (Mouse).